A 237-amino-acid chain; its full sequence is Lipoprotein-releasing system ATP-binding protein LolD (237 aa).

An ABC transporter domain is found at 16 to 237 (LKCEGLTRIY…LDQGRLSEDA (222 aa)). Residue 52–59 (GSSGSGKT) coordinates ATP.

The protein belongs to the ABC transporter superfamily. Lipoprotein translocase (TC 3.A.1.125) family. As to quaternary structure, the complex is composed of two ATP-binding proteins (LolD) and two transmembrane proteins (LolC and LolE).

The protein localises to the cell inner membrane. Functionally, part of the ABC transporter complex LolCDE involved in the translocation of mature outer membrane-directed lipoproteins, from the inner membrane to the periplasmic chaperone, LolA. Responsible for the formation of the LolA-lipoprotein complex in an ATP-dependent manner. The polypeptide is Lipoprotein-releasing system ATP-binding protein LolD (Chromohalobacter salexigens (strain ATCC BAA-138 / DSM 3043 / CIP 106854 / NCIMB 13768 / 1H11)).